The following is a 708-amino-acid chain: Elongation factor G 1 (708 aa).

The tr-type G domain occupies 9 to 295; the sequence is AKVRNIGIMA…AVVRYLPTPL (287 aa). Residues 18 to 25, 86 to 90, and 140 to 143 each bind GTP; these read AHIDAGKT, DTPGH, and NKLD.

This sequence belongs to the TRAFAC class translation factor GTPase superfamily. Classic translation factor GTPase family. EF-G/EF-2 subfamily.

Its subcellular location is the cytoplasm. Functionally, catalyzes the GTP-dependent ribosomal translocation step during translation elongation. During this step, the ribosome changes from the pre-translocational (PRE) to the post-translocational (POST) state as the newly formed A-site-bound peptidyl-tRNA and P-site-bound deacylated tRNA move to the P and E sites, respectively. Catalyzes the coordinated movement of the two tRNA molecules, the mRNA and conformational changes in the ribosome. The chain is Elongation factor G 1 (fusA) from Streptomyces coelicolor (strain ATCC BAA-471 / A3(2) / M145).